Here is a 189-residue protein sequence, read N- to C-terminus: Protein GrpE (189 aa).

The interval 1 to 37 (MSDSSKEKKKKFADMVSRQKGDDQQSDNHKQTDDLNE) is disordered. Residues 17–33 (SRQKGDDQQSDNHKQTD) show a composition bias toward basic and acidic residues.

Belongs to the GrpE family. As to quaternary structure, homodimer.

It is found in the cytoplasm. Its function is as follows. Participates actively in the response to hyperosmotic and heat shock by preventing the aggregation of stress-denatured proteins, in association with DnaK and GrpE. It is the nucleotide exchange factor for DnaK and may function as a thermosensor. Unfolded proteins bind initially to DnaJ; upon interaction with the DnaJ-bound protein, DnaK hydrolyzes its bound ATP, resulting in the formation of a stable complex. GrpE releases ADP from DnaK; ATP binding to DnaK triggers the release of the substrate protein, thus completing the reaction cycle. Several rounds of ATP-dependent interactions between DnaJ, DnaK and GrpE are required for fully efficient folding. In Wolbachia sp. subsp. Drosophila simulans (strain wRi), this protein is Protein GrpE.